The chain runs to 587 residues: Aspartate--tRNA ligase (587 aa).

E174 serves as a coordination point for L-aspartate. The tract at residues 198 to 201 (QITK) is aspartate. R220 lines the L-aspartate pocket. Residues 220–222 (RDE) and Q229 each bind ATP. L-aspartate is bound at residue H443. E477 is an ATP binding site. R484 serves as a coordination point for L-aspartate. 529 to 532 (GLDR) is a binding site for ATP.

The protein belongs to the class-II aminoacyl-tRNA synthetase family. Type 1 subfamily. In terms of assembly, homodimer.

It localises to the cytoplasm. The catalysed reaction is tRNA(Asp) + L-aspartate + ATP = L-aspartyl-tRNA(Asp) + AMP + diphosphate. In terms of biological role, catalyzes the attachment of L-aspartate to tRNA(Asp) in a two-step reaction: L-aspartate is first activated by ATP to form Asp-AMP and then transferred to the acceptor end of tRNA(Asp). This chain is Aspartate--tRNA ligase, found in Streptococcus pneumoniae serotype 4 (strain ATCC BAA-334 / TIGR4).